The following is a 378-amino-acid chain: Glutamate 5-kinase (378 aa).

An ATP-binding site is contributed by K20. S60, D147, and N159 together coordinate substrate. Residues 179–180 (TD) and 221–227 (TGGMLTK) each bind ATP. A PUA domain is found at 286 to 364 (RGRVVLDAGA…SQIARILGSM (79 aa)).

It belongs to the glutamate 5-kinase family.

It localises to the cytoplasm. The catalysed reaction is L-glutamate + ATP = L-glutamyl 5-phosphate + ADP. It participates in amino-acid biosynthesis; L-proline biosynthesis; L-glutamate 5-semialdehyde from L-glutamate: step 1/2. Catalyzes the transfer of a phosphate group to glutamate to form L-glutamate 5-phosphate. This chain is Glutamate 5-kinase, found in Bordetella petrii (strain ATCC BAA-461 / DSM 12804 / CCUG 43448).